Here is a 315-residue protein sequence, read N- to C-terminus: DNA-directed RNA polymerase subunit alpha (315 aa).

The alpha N-terminal domain (alpha-NTD) stretch occupies residues methionine 1 to serine 228. The tract at residues isoleucine 238–serine 315 is alpha C-terminal domain (alpha-CTD).

This sequence belongs to the RNA polymerase alpha chain family. In terms of assembly, in cyanobacteria the RNAP catalytic core is composed of 2 alpha, 1 beta, 1 beta', 1 gamma and 1 omega subunit. When a sigma factor is associated with the core the holoenzyme is formed, which can initiate transcription.

It carries out the reaction RNA(n) + a ribonucleoside 5'-triphosphate = RNA(n+1) + diphosphate. DNA-dependent RNA polymerase catalyzes the transcription of DNA into RNA using the four ribonucleoside triphosphates as substrates. In Trichormus variabilis (strain ATCC 29413 / PCC 7937) (Anabaena variabilis), this protein is DNA-directed RNA polymerase subunit alpha.